Consider the following 509-residue polypeptide: Probable cytochrome P450 513A1 (509 aa).

Residues 2-19 (NYLVGLVLIFTIFYFFLQ) form a helical membrane-spanning segment. Cys-454 contributes to the heme binding site.

It belongs to the cytochrome P450 family. Requires heme as cofactor.

The protein resides in the membrane. The sequence is that of Probable cytochrome P450 513A1 (cyp513A1) from Dictyostelium discoideum (Social amoeba).